Consider the following 364-residue polypeptide: Long-wave-sensitive opsin 1 (364 aa).

The Extracellular segment spans residues 1–52; it reads MAHTWGPQRLAGGQPQANFEESTQGSIFTYTNSNSTRDPFEGPNYHIAPRWV. Serine 22 carries an O-linked (GlcNAc) serine glycan. Residue asparagine 34 is glycosylated (N-linked (GlcNAc...) asparagine). Residues 53-77 form a helical membrane-spanning segment; sequence YHLTSAWMVFVVIASVFTNGLVLAA. The Cytoplasmic segment spans residues 78–89; it reads TMRFKKLRHPLN. Residues 90 to 115 form a helical membrane-spanning segment; the sequence is WILVNLAIADLAETIIASTISVVNQM. Residues 116-129 are Extracellular-facing; sequence YGYFVLGHPLCVVE. A disulfide bond links cysteine 126 and cysteine 203. The helical transmembrane segment at 130-149 threads the bilayer; that stretch reads GYTVSLCGITGLWSLAIISW. Residues 150-168 are Cytoplasmic-facing; sequence ERWMVVCKPFGNVRFDAKL. Residues 169–192 traverse the membrane as a helical segment; that stretch reads ATAGIAFSWIWAAVWTAPPIFGWS. At 193–218 the chain is on the extracellular side; the sequence is RYWPHGLKTSCGPDVFSGSSYPGVQS. A helical membrane pass occupies residues 219–246; the sequence is YMIVLMITCCFIPLSVIILCYLQVWLAI. Topologically, residues 247–268 are cytoplasmic; that stretch reads RAVAKQQKESESTQKAEKEVTR. Residues 269–292 form a helical membrane-spanning segment; sequence MVMVMIFAYCLCWGPYTFFACFAA. Residues 293–300 lie on the Extracellular side of the membrane; it reads AHPGYAFH. The helical transmembrane segment at 301–325 threads the bilayer; that stretch reads PLVAALPAYFAKSATIYNPIIYVFM. An N6-(retinylidene)lysine modification is found at lysine 312. At 326 to 364 the chain is on the cytoplasmic side; sequence NRQFRNCILQLFGKKVDDSSELSSVSKTEASSVSSVSPA.

It belongs to the G-protein coupled receptor 1 family. Opsin subfamily. In terms of processing, phosphorylated on some or all of the serine and threonine residues present in the C-terminal region. In terms of tissue distribution, the three color pigments are found in the cone photoreceptor cells.

The protein resides in the membrane. In terms of biological role, visual pigments are the light-absorbing molecules that mediate vision. They consist of an apoprotein, opsin, covalently linked to cis-retinal. The sequence is that of Long-wave-sensitive opsin 1 (OPN1LW) from Capra hircus (Goat).